The chain runs to 474 residues: Nitrogenase vanadium-iron protein alpha chain (474 aa).

Positions 49, 75, and 138 each coordinate [8Fe-7S] cluster. [7Fe-V-9S-C-homocitryl] cluster-binding residues include cysteine 257 and histidine 423.

Belongs to the NifD/NifK/NifE/NifN family. In terms of assembly, hexamer of two alpha, two beta, and two delta chains. [8Fe-7S] cluster is required as a cofactor. The cofactor is [7Fe-V-9S-C-homocitryl] cluster.

The enzyme catalyses N2 + 8 reduced [2Fe-2S]-[ferredoxin] + 16 ATP + 16 H2O = H2 + 8 oxidized [2Fe-2S]-[ferredoxin] + 2 NH4(+) + 16 ADP + 16 phosphate + 6 H(+). Functionally, this vanadium-iron protein is part of the nitrogenase complex that catalyzes the key enzymatic reactions in nitrogen fixation. The polypeptide is Nitrogenase vanadium-iron protein alpha chain (vnfD) (Azotobacter vinelandii).